We begin with the raw amino-acid sequence, 316 residues long: Transaldolase (316 aa).

Lys132 functions as the Schiff-base intermediate with substrate in the catalytic mechanism.

Belongs to the transaldolase family. Type 1 subfamily. Homodimer.

It localises to the cytoplasm. It carries out the reaction D-sedoheptulose 7-phosphate + D-glyceraldehyde 3-phosphate = D-erythrose 4-phosphate + beta-D-fructose 6-phosphate. It functions in the pathway carbohydrate degradation; pentose phosphate pathway; D-glyceraldehyde 3-phosphate and beta-D-fructose 6-phosphate from D-ribose 5-phosphate and D-xylulose 5-phosphate (non-oxidative stage): step 2/3. Its function is as follows. Transaldolase is important for the balance of metabolites in the pentose-phosphate pathway. The protein is Transaldolase of Marinomonas sp. (strain MWYL1).